The primary structure comprises 316 residues: Transaldolase (316 aa).

K132 functions as the Schiff-base intermediate with substrate in the catalytic mechanism.

This sequence belongs to the transaldolase family. Type 1 subfamily. Homodimer.

It is found in the cytoplasm. The enzyme catalyses D-sedoheptulose 7-phosphate + D-glyceraldehyde 3-phosphate = D-erythrose 4-phosphate + beta-D-fructose 6-phosphate. It participates in carbohydrate degradation; pentose phosphate pathway; D-glyceraldehyde 3-phosphate and beta-D-fructose 6-phosphate from D-ribose 5-phosphate and D-xylulose 5-phosphate (non-oxidative stage): step 2/3. Functionally, transaldolase is important for the balance of metabolites in the pentose-phosphate pathway. This is Transaldolase from Aliivibrio fischeri (strain ATCC 700601 / ES114) (Vibrio fischeri).